The chain runs to 1464 residues: Glutamate receptor ionotropic, NMDA 2A (1464 aa).

The N-terminal stretch at 1–22 (MGRVGYWTLLVLPALLVWRGPA) is a signal peptide. Residues 23–556 (PSAAAEKGPP…SAFLEPFSAS (534 aa)) lie on the Extracellular side of the membrane. His44 provides a ligand contact to Zn(2+). Asn75 carries an N-linked (GlcNAc...) asparagine glycan. Cys87 and Cys320 form a disulfide bridge. His128, Glu266, and Asp282 together coordinate Zn(2+). N-linked (GlcNAc...) asparagine glycosylation is found at Asn340, Asn380, Asn443, and Asn444. 2 disulfides stabilise this stretch: Cys429-Cys455 and Cys436-Cys456. Ser511, Thr513, and Arg518 together coordinate L-glutamate. Asn541 carries N-linked (GlcNAc...) asparagine glycosylation. The chain crosses the membrane as a helical span at residues 557 to 576 (VWVMMFVMLLIVSAIAVFVF). Topologically, residues 577 to 600 (EYFSPVGYNRNLAKGKAPHGPSFT) are cytoplasmic. The interval 599 to 620 (FTIGKAIWLLWGLVFNNSVPVQ) is pore-forming. The discontinuously helical intramembrane region spans 601–615 (IGKAIWLLWGLVFNN). At 616–625 (SVPVQNPKGT) the chain is on the cytoplasmic side. A helical membrane pass occupies residues 626-646 (TSKIMVSVWAFFAVIFLASYT). The Extracellular segment spans residues 647-814 (ANLAAFMIQE…NEVMSSQLDI (168 aa)). N-linked (GlcNAc...) asparagine glycosylation occurs at Asn687. Positions 689, 690, and 731 each coordinate L-glutamate. The cysteines at positions 745 and 800 are disulfide-linked. Residues 815–835 (DNMAGVFYMLAAAMALSLITF) traverse the membrane as a helical segment. At 836-1464 (IWEHLFYWKL…KKMPSIESDV (629 aa)) the chain is on the cytoplasmic side. Residues Ser882, Ser890, and Ser929 each carry the phosphoserine modification. Composition is skewed to polar residues over residues 997–1010 (EVAV…NSRP) and 1023–1032 (QDSLSQNPVS). The disordered stretch occupies residues 997 to 1083 (EVAVSTESKA…PDNSKNHKTK (87 aa)). Ser1025 carries the phosphoserine modification. Basic and acidic residues-rich tracts occupy residues 1033-1043 (QRDEATAENRT) and 1052-1061 (LPEEMAHSDI). Residues Ser1059 and Ser1062 each carry the phosphoserine modification. A compositionally biased stretch (basic and acidic residues) spans 1070 to 1083 (CHREPDNSKNHKTK). A phosphoserine mark is found at Ser1198 and Ser1291. The interval 1335-1372 (KLSGKKSSLFPQGLEDSKRSKSLLPDHTSDNPFLHSHR) is disordered. Residues 1462 to 1464 (SDV) carry the PDZ-binding motif.

It belongs to the glutamate-gated ion channel (TC 1.A.10.1) family. NR2A/GRIN2A subfamily. In terms of assembly, heterotetramer. Forms heterotetrameric channels composed of two GluN1/zeta subunits (GRIN1), and two identical GluN2/epsilon subunits (GRIN2A, GRIN2B, GRIN2C or GRIN2D) or GluN3 subunits (GRIN3A or GRIN3B) (in vitro). Can also form heterotetrameric channels that contain at least two GluN1 subunits and at least two different GluN2 subunits (or a combination of one GluN2 and one GluN3 subunits) (in vitro). In vivo, the subunit composition may depend on the expression levels of the different subunits. Found in a complex with GRIN1, GRIN3A and PPP2CB. Found in a complex with GRIN1 and GRIN3B. Interacts with AIP1. Interacts with HIP1 and NETO1. Interacts with SNX27 (via PDZ domain); the interaction is required for recycling to the plasma membrane when endocytosed and prevent degradation in lysosomes. Interacts with PDZ domains of PATJ and DLG4. Interacts with LRFN2. Interacts with RPH3A and DLG4; this ternary complex regulates NMDA receptor composition at postsynaptic membranes. Interacts with SORCS2. Interacts with ARC; preventing ARC oligomerization. Interacts (via the extreme C-terminus) with FRMPD2 (the second PDZ domain); the interaction is direct and is likely to promote NMDAR-mediated neural signal transmission. GRIN2A binds FRMPD2 with lower affinity than GRIN2B.

It localises to the cell projection. Its subcellular location is the dendritic spine. The protein localises to the cell membrane. It is found in the synapse. The protein resides in the postsynaptic cell membrane. It localises to the cytoplasmic vesicle membrane. The catalysed reaction is Ca(2+)(in) = Ca(2+)(out). It carries out the reaction Na(+)(in) = Na(+)(out). The enzyme catalyses K(+)(in) = K(+)(out). NMDA glutamate receptor activity is inhibited by endogenous Mg(2+) in a voltage-dependent manner. NMDA glutamate receptor activity is inhibited by endogenous Zn(2+). NMDA glutamate receptor activity is inhibited by endogenous protons. In terms of biological role, component of N-methyl-D-aspartate (NMDA) receptors (NMDARs) that function as heterotetrameric, ligand-gated cation channels with high calcium permeability and voltage-dependent block by Mg(2+). NMDARs participate in synaptic plasticity for learning and memory formation by contributing to the slow phase of excitatory postsynaptic current, long-term synaptic potentiation, and learning. Channel activation requires binding of the neurotransmitter L-glutamate to the GluN2 subunit, glycine or D-serine binding to the GluN1 subunit, plus membrane depolarization to eliminate channel inhibition by Mg(2+). NMDARs mediate simultaneously the potasium efflux and the influx of calcium and sodium. Each GluN2 subunit confers differential attributes to channel properties, including activation, deactivation and desensitization kinetics, pH sensitivity, Ca2(+) permeability, and binding to allosteric modulators. Participates in the synaptic plasticity regulation through activation by the L-glutamate releaseed by BEST1, into the synaptic cleft, upon F2R/PAR-1 activation in astrocyte. This is Glutamate receptor ionotropic, NMDA 2A from Homo sapiens (Human).